A 264-amino-acid chain; its full sequence is Type III pantothenate kinase 2 (264 aa).

6–13 (DVGNTFTV) is an ATP binding site. Residues Tyr-100 and 107–110 (GADR) each bind substrate. Asp-109 functions as the Proton acceptor in the catalytic mechanism. Asp-129 contacts K(+). Thr-132 provides a ligand contact to ATP. Thr-184 is a binding site for substrate.

This sequence belongs to the type III pantothenate kinase family. As to quaternary structure, homodimer. It depends on NH4(+) as a cofactor. K(+) serves as cofactor.

It is found in the cytoplasm. The catalysed reaction is (R)-pantothenate + ATP = (R)-4'-phosphopantothenate + ADP + H(+). Its pathway is cofactor biosynthesis; coenzyme A biosynthesis; CoA from (R)-pantothenate: step 1/5. In terms of biological role, catalyzes the phosphorylation of pantothenate (Pan), the first step in CoA biosynthesis. This is Type III pantothenate kinase 2 from Symbiobacterium thermophilum (strain DSM 24528 / JCM 14929 / IAM 14863 / T).